A 41-amino-acid polypeptide reads, in one-letter code: Photosystem I reaction center subunit IX (41 aa).

A helical membrane pass occupies residues 7–27; that stretch reads YLSTAPVIALAWMSFTAGLLI.

The protein belongs to the PsaJ family.

Its subcellular location is the plastid. The protein resides in the chloroplast thylakoid membrane. May help in the organization of the PsaE and PsaF subunits. The sequence is that of Photosystem I reaction center subunit IX from Tupiella akineta (Green alga).